The sequence spans 189 residues: Peptidyl-tRNA hydrolase (189 aa).

Tyr15 lines the tRNA pocket. His20 (proton acceptor) is an active-site residue. Phe66, Asn68, and Asn114 together coordinate tRNA.

This sequence belongs to the PTH family. As to quaternary structure, monomer.

The protein localises to the cytoplasm. It carries out the reaction an N-acyl-L-alpha-aminoacyl-tRNA + H2O = an N-acyl-L-amino acid + a tRNA + H(+). Its function is as follows. Hydrolyzes ribosome-free peptidyl-tRNAs (with 1 or more amino acids incorporated), which drop off the ribosome during protein synthesis, or as a result of ribosome stalling. Functionally, catalyzes the release of premature peptidyl moieties from peptidyl-tRNA molecules trapped in stalled 50S ribosomal subunits, and thus maintains levels of free tRNAs and 50S ribosomes. The sequence is that of Peptidyl-tRNA hydrolase from Dichelobacter nodosus (strain VCS1703A).